Here is a 513-residue protein sequence, read N- to C-terminus: Putative fucosyltransferase-like protein (513 aa).

Positions 1 to 34 are disordered; it reads MGVFSNLRGPRAGATHDEFPATNGSPSSSSSPSS. The Cytoplasmic segment spans residues 1–39; sequence MGVFSNLRGPRAGATHDEFPATNGSPSSSSSPSSSIKRK. The span at 25-34 shows a compositional bias: low complexity; it reads SPSSSSSPSS. The helical; Signal-anchor for type II membrane protein transmembrane segment at 40 to 60 threads the bilayer; it reads LSNLLPLCVALVVIAEIGFLG. The Lumenal portion of the chain corresponds to 61–513; the sequence is RLDKVALVDT…PCAKFEVVFV (453 aa). Asparagine 348 and asparagine 493 each carry an N-linked (GlcNAc...) asparagine glycan.

Belongs to the glycosyltransferase 10 family.

The protein resides in the golgi apparatus. The protein localises to the golgi stack membrane. It functions in the pathway protein modification; protein glycosylation. Functionally, may be involved in cell wall biosynthesis. May act as a fucosyltransferase. The chain is Putative fucosyltransferase-like protein (FUT12) from Arabidopsis thaliana (Mouse-ear cress).